Here is a 117-residue protein sequence, read N- to C-terminus: Reprimo-like protein (117 aa).

Residues 64-84 form a helical membrane-spanning segment; it reads VAQIAVLCVLSLTVVFGVFFL. S106 carries the post-translational modification Phosphoserine.

This sequence belongs to the reprimo family.

The protein resides in the membrane. The polypeptide is Reprimo-like protein (Rprml) (Mus musculus (Mouse)).